The sequence spans 473 residues: MRAGLGPIITLALVLEVAWAGELKPTAPPIFTGRPFVVAWNVPTQECAPRHKVPLDLRAFDVKATPNEGFFNQNITTFYYDRLGLYPRFDAAGTSVHGGVPQNGSLCAHLPMLKESVERYIQTQEPGGLAVIDWEEWRPVWVRNWQEKDVYRQSSRQLVASRHPDWPSDRVMKQAQYEFEFAARQFMLNTLRYVKAVRPQHLWGFYLFPDCYNHDYVQNWESYTGRCPDVEVARNDQLAWLWAESTALFPSVYLDETLASSVHSRNFVSFRVREALRVAHTHHANHALPVYVFTRPTYTRGLTGLSQVDLISTIGESAALGSAGVIFWGDSEDASSMETCQYLKNYLTQLLVPYIVNVSWATQYCSWTQCHGHGRCVRRNPSANTFLHLNASSFRLVPGHTPSEPQLRPEGQLSEADLNYLQKHFRCQCYLGWGGEQCQRNYKGAAGNASRAWAGSHLTSLLGLVAVALTWTL.

The signal sequence occupies residues Met-1–Ala-20. 2 disulfides stabilise this stretch: Cys-47–Cys-340 and Cys-211–Cys-227. Residues Asn-74 and Asn-103 are each glycosylated (N-linked (GlcNAc...) asparagine). The Proton donor role is filled by Glu-135. Asn-357 carries an N-linked (GlcNAc...) asparagine glycan. An EGF-like domain is found at Ala-361 to Gln-439. Intrachain disulfides connect Cys-365–Cys-376, Cys-370–Cys-427, and Cys-429–Cys-438. The N-linked (GlcNAc...) asparagine glycan is linked to Asn-390. Residue Asn-448 is the site of GPI-anchor amidated asparagine; alternate attachment. An N-linked (GlcNAc...) asparagine; alternate glycan is attached at Asn-448. The propeptide at Ala-449–Leu-473 is removed in mature form.

The protein belongs to the glycosyl hydrolase 56 family. As to quaternary structure, interacts with MST1R. As to expression, widely expressed, with highest expression levels in kidney, lung and liver (at protein level).

It localises to the cell membrane. The enzyme catalyses Random hydrolysis of (1-&gt;4)-linkages between N-acetyl-beta-D-glucosamine and D-glucuronate residues in hyaluronate.. Catalyzes hyaluronan degradation into small fragments that are endocytosed and degraded in lysosomes by HYAL1 and exoglycosidases. Essential for the breakdown of extracellular matrix hyaluronan. This Mus musculus (Mouse) protein is Hyaluronidase-2 (Hyal2).